The chain runs to 657 residues: Threonine--tRNA ligase (657 aa).

Positions 1–62 constitute a TGS domain; that stretch reads MALDITFPDG…AHSGQLQIMT (62 aa). The tract at residues 240 to 538 is catalytic; that stretch reads DHRVIGRDLD…LTEIYKGAFP (299 aa). C334, H385, and H515 together coordinate Zn(2+).

The protein belongs to the class-II aminoacyl-tRNA synthetase family. Homodimer. The cofactor is Zn(2+).

The protein localises to the cytoplasm. The enzyme catalyses tRNA(Thr) + L-threonine + ATP = L-threonyl-tRNA(Thr) + AMP + diphosphate + H(+). Catalyzes the attachment of threonine to tRNA(Thr) in a two-step reaction: L-threonine is first activated by ATP to form Thr-AMP and then transferred to the acceptor end of tRNA(Thr). Also edits incorrectly charged L-seryl-tRNA(Thr). The polypeptide is Threonine--tRNA ligase (Lacticaseibacillus paracasei (strain ATCC 334 / BCRC 17002 / CCUG 31169 / CIP 107868 / KCTC 3260 / NRRL B-441) (Lactobacillus paracasei)).